We begin with the raw amino-acid sequence, 138 residues long: MRTLWIVAVCLIGVEGNLFQFAEMIVKMTGKEAVHSYAIYGCYCGWGGQGKPQDATDRCCFVHDCCYGTVNDCNPKMATYSYSFENGDIVCGDNNLCLKTVCECDRAAAICLGQNVNTYDKNYENYAISHCTEESEQC.

The signal sequence occupies residues 1 to 16 (MRTLWIVAVCLIGVEG). 7 cysteine pairs are disulfide-bonded: C42-C131, C44-C60, C59-C111, C65-C138, C66-C104, C73-C97, and C91-C102. Y43, G45, and G47 together coordinate Ca(2+). The active site involves H63. D64 is a binding site for Ca(2+). Residue D105 is part of the active site.

It belongs to the phospholipase A2 family. Group II subfamily. D49 sub-subfamily. Ca(2+) is required as a cofactor. Expressed by the venom gland.

It is found in the secreted. It catalyses the reaction a 1,2-diacyl-sn-glycero-3-phosphocholine + H2O = a 1-acyl-sn-glycero-3-phosphocholine + a fatty acid + H(+). Snake venom phospholipase A2 (PLA2) that exhibits high hydrolytic activities and shows strong preference for the anionic micelles (dPPC with deoxycholate) to the zwitterionic micelles (dPPC with Triton X-100). PLA2 catalyzes the calcium-dependent hydrolysis of the 2-acyl groups in 3-sn-phosphoglycerides. The sequence is that of Acidic phospholipase A2 Drk-a1 from Daboia russelii (Russel's viper).